Here is a 258-residue protein sequence, read N- to C-terminus: Glutamate racemase (258 aa).

Residues 12–13 (DS) and 44–45 (YG) contribute to the substrate site. Cysteine 75 serves as the catalytic Proton donor/acceptor. Substrate is bound at residue 76–77 (NT). Catalysis depends on cysteine 186, which acts as the Proton donor/acceptor. Position 187-188 (187-188 (TH)) interacts with substrate.

This sequence belongs to the aspartate/glutamate racemases family.

The catalysed reaction is L-glutamate = D-glutamate. The protein operates within cell wall biogenesis; peptidoglycan biosynthesis. Functionally, provides the (R)-glutamate required for cell wall biosynthesis. In Clostridium botulinum (strain Alaska E43 / Type E3), this protein is Glutamate racemase.